The following is a 319-amino-acid chain: Probable deoxyhypusine synthase (319 aa).

Residue K287 is the Nucleophile of the active site.

This sequence belongs to the deoxyhypusine synthase family. The cofactor is NAD(+).

The catalysed reaction is [eIF5A protein]-L-lysine + spermidine = [eIF5A protein]-deoxyhypusine + propane-1,3-diamine. The protein operates within protein modification; eIF5A hypusination. Catalyzes the NAD-dependent oxidative cleavage of spermidine and the subsequent transfer of the butylamine moiety of spermidine to the epsilon-amino group of a specific lysine residue of the eIF-5A precursor protein to form the intermediate deoxyhypusine residue. This is Probable deoxyhypusine synthase from Ignicoccus hospitalis (strain KIN4/I / DSM 18386 / JCM 14125).